The following is a 1391-amino-acid chain: DNA-directed RNA polymerase subunit beta'' (1391 aa).

4 residues coordinate Zn(2+): cysteine 224, cysteine 295, cysteine 302, and cysteine 305.

This sequence belongs to the RNA polymerase beta' chain family. RpoC2 subfamily. In terms of assembly, in plastids the minimal PEP RNA polymerase catalytic core is composed of four subunits: alpha, beta, beta', and beta''. When a (nuclear-encoded) sigma factor is associated with the core the holoenzyme is formed, which can initiate transcription. Zn(2+) serves as cofactor.

It localises to the plastid. The protein localises to the chloroplast. The catalysed reaction is RNA(n) + a ribonucleoside 5'-triphosphate = RNA(n+1) + diphosphate. In terms of biological role, DNA-dependent RNA polymerase catalyzes the transcription of DNA into RNA using the four ribonucleoside triphosphates as substrates. In Buxus microphylla (Littleleaf boxwood), this protein is DNA-directed RNA polymerase subunit beta''.